The chain runs to 357 residues: H-2 class I histocompatibility antigen, D-37 alpha chain (357 aa).

The N-terminal stretch at 1 to 20 (MLLFAHLLQLLVSATVPTQS) is a signal peptide. Positions 21-110 (SPHSLRYFTT…LLGYYNQSND (90 aa)) are alpha-1. At 21 to 304 (SPHSLRYFTT…EPPPSTVSNM (284 aa)) the chain is on the extracellular side. Residue Asn106 is glycosylated (N-linked (GlcNAc...) asparagine). Residues 111-202 (ESHTLQWMYG…RLGNETLQRS (92 aa)) are alpha-2. An intrachain disulfide couples Cys121 to Cys184. Residue Asn196 is glycosylated (N-linked (GlcNAc...) asparagine). Residues 203–294 (DPPKAHVTHH…GLPEPLTLRW (92 aa)) form an alpha-3 region. In terms of domain architecture, Ig-like C1-type spans 205–293 (PKAHVTHHPR…EGLPEPLTLR (89 aa)). Cysteines 223 and 279 form a disulfide. Positions 295-304 (EPPPSTVSNM) are connecting peptide. Residues 305–327 (VIIAVLVVLGAVIILGAVVAFVM) form a helical membrane-spanning segment. The Cytoplasmic segment spans residues 328 to 357 (KRRRHIGVKGCYAHVLGSKSFQTSDWPQKA). At Ser347 the chain carries Phosphoserine.

The protein belongs to the MHC class I family. As to quaternary structure, heterodimer of an alpha chain and a beta chain (beta-2-microglobulin).

It localises to the membrane. In terms of biological role, involved in the presentation of foreign antigens to the immune system. The protein is H-2 class I histocompatibility antigen, D-37 alpha chain (H2-T23) of Mus musculus (Mouse).